A 566-amino-acid chain; its full sequence is ATP-binding protein SyrD (566 aa).

The 280-residue stretch at 22–301 (HPWLTFFTLL…LVSAMPMLAQ (280 aa)) folds into the ABC transmembrane type-1 domain. 6 helical membrane-spanning segments follow: residues 24–44 (WLTFFTLLTGLISGVASIAVV), 61–81 (LFWFVGLSVVALLFRNGASLF), 132–152 (LLIMPTILVESAVFLFGIAYL), 158–178 (VVFAITISLMILGVAMYLLFF), 250–270 (QLTLSLLVGCLLFAAPMFAVI), and 279–299 (VLAVLYIMGPLVMLVSAMPML). Residues 343-566 (IQLKNVHMNY…VKCAVEGKRA (224 aa)) enclose the ABC transporter domain. 380–387 (GGNGCGKS) contributes to the ATP binding site.

This sequence belongs to the ABC transporter superfamily. Dimer.

Its subcellular location is the cell inner membrane. Functionally, ATP-driven efflux pump necessary for the secretion of syringomycin. May specifically bind syringomycin and translocate it to the periplasmic space. SyrD is also required for full expression of the syrB gene. This is ATP-binding protein SyrD (syrD) from Pseudomonas syringae pv. syringae.